The primary structure comprises 571 residues: Pectinesterase/pectinesterase inhibitor (571 aa).

The pectinesterase inhibitor stretch occupies residues 27–178 (NSHQKAVESL…KILSSNAIDI (152 aa)). A disordered region spans residues 233-254 (AQAGRPGAPADEGIGEGGGGGG). Residues 259-558 (THVVAKDGSG…TVANWLTPAN (300 aa)) form a pectinesterase region. Substrate-binding residues include T336 and Q366. The active-site Proton donor; for pectinesterase activity is the D389. D410 serves as the catalytic Nucleophile; for pectinesterase activity. Substrate contacts are provided by R479 and W481.

In the N-terminal section; belongs to the PMEI family. This sequence in the C-terminal section; belongs to the pectinesterase family.

Its subcellular location is the secreted. The protein resides in the cell wall. The catalysed reaction is [(1-&gt;4)-alpha-D-galacturonosyl methyl ester](n) + n H2O = [(1-&gt;4)-alpha-D-galacturonosyl](n) + n methanol + n H(+). It participates in glycan metabolism; pectin degradation; 2-dehydro-3-deoxy-D-gluconate from pectin: step 1/5. Its function is as follows. Acts in the modification of cell walls via demethylesterification of cell wall pectin. The chain is Pectinesterase/pectinesterase inhibitor from Brassica campestris (Field mustard).